The primary structure comprises 845 residues: Protein translocase subunit SecA 1 (845 aa).

Residues glutamine 85, 103–107, and aspartate 492 contribute to the ATP site; that span reads GEGKT.

The protein belongs to the SecA family. Monomer and homodimer. Part of the essential Sec protein translocation apparatus which comprises SecA, SecYEG and auxiliary proteins SecDF. Other proteins may also be involved.

It localises to the cell membrane. It is found in the cytoplasm. It carries out the reaction ATP + H2O + cellular proteinSide 1 = ADP + phosphate + cellular proteinSide 2.. Part of the Sec protein translocase complex. Interacts with the SecYEG preprotein conducting channel. Has a central role in coupling the hydrolysis of ATP to the transfer of proteins into and across the cell membrane, serving as an ATP-driven molecular motor driving the stepwise translocation of polypeptide chains across the membrane. This chain is Protein translocase subunit SecA 1, found in Corynebacterium glutamicum (strain ATCC 13032 / DSM 20300 / JCM 1318 / BCRC 11384 / CCUG 27702 / LMG 3730 / NBRC 12168 / NCIMB 10025 / NRRL B-2784 / 534).